Here is a 427-residue protein sequence, read N- to C-terminus: Enolase (427 aa).

Glutamine 163 contacts (2R)-2-phosphoglycerate. Glutamate 205 functions as the Proton donor in the catalytic mechanism. Mg(2+) contacts are provided by aspartate 242, glutamate 285, and aspartate 312. (2R)-2-phosphoglycerate is bound by residues lysine 337, arginine 366, serine 367, and lysine 388. The Proton acceptor role is filled by lysine 337.

It belongs to the enolase family. Mg(2+) serves as cofactor.

It localises to the cytoplasm. Its subcellular location is the secreted. It is found in the cell surface. The enzyme catalyses (2R)-2-phosphoglycerate = phosphoenolpyruvate + H2O. It participates in carbohydrate degradation; glycolysis; pyruvate from D-glyceraldehyde 3-phosphate: step 4/5. In terms of biological role, catalyzes the reversible conversion of 2-phosphoglycerate (2-PG) into phosphoenolpyruvate (PEP). It is essential for the degradation of carbohydrates via glycolysis. The protein is Enolase of Janthinobacterium sp. (strain Marseille) (Minibacterium massiliensis).